The chain runs to 1278 residues: MPVVINSFNYNDPVNDDTILYMQIPYEEKSKKYYKAFEIMRNVWIIPERNTIGTDPSDFDPPASLENGSSAYYDPNYLTTDAEKDRYLKTTIKLFKRINSNPAGEVLLQEISYAKPYLGNEHTPINEFHPVTRTTSVNIKSSTNVKSSIILNLLVLGAGPDIFENSSYPVRKLMDSGGVYDPSNDGFGSINIVTFSPEYEYTFNDISGGYNSSTESFIADPAISLAHELIHALHGLYGARGVTYKETIKVKQAPLMIAEKPIRLEEFLTFGGQDLNIITSAMKEKIYNNLLANYEKIATRLSRVNSAPPEYDINEYKDYFQWKYGLDKNADGSYTVNENKFNEIYKKLYSFTEIDLANKFKVKCRNTYFIKYGFLKVPNLLDDDIYTVSEGFNIGNLAVNNRGQNIKLNPKIIDSIPDKGLVEKIVKFCKSVIPRKGTKAPPRLCIRVNNRELFFVASESSYNENDINTPKEIDDTTNLNNNYRNNLDEVILDYNSETIPQISNQTLNTLVQDDSYVPRYDSNGTSEIEEHNVVDLNVFFYLHAQKVPEGETNISLTSSIDTALSEESQVYTFFSSEFINTINKPVHAALFISWINQVIRDFTTEATQKSTFDKIADISLVVPYVGLALNIGNEVQKENFKEAFELLGAGILLEFVPELLIPTILVFTIKSFIGSSENKNKIIKAINNSLMERETKWKEIYSWIVSNWLTRINTQFNKRKEQMYQALQNQVDAIKTVIEYKYNNYTSDERNRLESEYNINNIREELNKKVSLAMENIERFITESSIFYLMKLINEAKVSKLREYDEGVKEYLLDYISEHRSILGNSVQELNDLVTSTLNNSIPFELSSYTNDKILILYFNKLYKKIKDNSILDMRYENNKFIDISGYGSNISINGDVYIYSTNRNQFGIYSSKPSEVNIAQNNDIIYNGRYQNFSISFWVRIPKYFNKVNLNNEYTIIDCIRNNNSGWKISLNYNKIIWTLQDTAGNNQKLVFNYTQMISISDYINKWIFVTITNNRLGNSRIYINGNLIDEKSISNLGDIHVSDNILFKIVGCNDTRYVGIRYFKVFDTELGKTEIETLYSDEPDPSILKDFWGNYLLYNKRYYLLNLLRTDKSITQNSNFLNINQQRGVYQKPNIFSNTRLYTGVEVIIRKNGSTDISNTDNFVRKNDLAYINVVDRDVEYRLYADISIAKPEKIIKLIRTSNSNNSLGQIIVMDSIGNNCTMNFQNNNGGNIGLLGFHSNNLVASSWYYNNIRKNTSSNGCFWSFISKEHGWQEN.

His227 provides a ligand contact to Zn(2+). The active site involves Glu228. His231 and Glu266 together coordinate Zn(2+). A disulfide bond links Cys429 and Cys445. A translocation domain (TD) region spans residues 440–862 (APPRLCIRVN…KILILYFNKL (423 aa)). Residues 485 to 534 (NNLDEVILDYNSETIPQISNQTLNTLVQDDSYVPRYDSNGTSEIEEHNVV) are belt. Residues 717–783 (NKRKEQMYQA…MENIERFITE (67 aa)) are a coiled coil. The tract at residues 864–1085 (KKIKDNSILD…EIETLYSDEP (222 aa)) is N-terminus of receptor binding domain (N-RBD). Positions 1086 to 1278 (DPSILKDFWG…ISKEHGWQEN (193 aa)) are C-terminus of receptor binding domain (C-RBD). The a ganglioside GD1a (d18:1(4E)) site is built by Arg1111 and Glu1195. Host ganglioside GD1a binding regions lie at residues 1240–1241 (FH) and 1248–1250 (SSW). The Host ganglioside-binding motif signature appears at 1245-1248 (LVAS). Arg1256 lines the a ganglioside GD1a (d18:1(4E)) pocket.

This sequence belongs to the peptidase M27 family. In terms of assembly, heterodimer; disulfide-linked heterodimer of a light chain (LC) and a heavy chain (HC). The LC has the proteolytic/pharmacological activity, while the N- and C-terminal of the HC mediate channel formation and toxin binding, respectively. Interacts with host synaptic vesicle glycoproteins SV2A, SV2B and SV2C. HC interacts with a complex including at least host SV2 and synaptotagmin-1 (SYT1); copurification depends on glycosylation of SV2. The cofactor is Zn(2+).

Its subcellular location is the secreted. The protein localises to the host cytoplasm. It localises to the host cytosol. The protein resides in the host synapse. It is found in the host presynaptic cell membrane. Its subcellular location is the host cytoplasmic vesicle. The protein localises to the host secretory vesicle. It localises to the host synaptic vesicle membrane. The enzyme catalyses Limited hydrolysis of proteins of the neuroexocytosis apparatus, synaptobrevins, SNAP25 or syntaxin. No detected action on small molecule substrates.. In terms of biological role, botulinum toxin causes flaccid paralysis by inhibiting neurotransmitter (acetylcholine) release from the presynaptic membranes of nerve terminals of the eukaryotic host skeletal and autonomic nervous system, with frequent heart or respiratory failure. Precursor of botulinum neurotoxin F which may have 2 coreceptors; complex polysialylated gangliosides found on neural tissue and specific membrane-anchored proteins found in synaptic vesicles. Receptor proteins are exposed on host presynaptic cell membrane during neurotransmitter release, when the toxin heavy chain (HC) binds to them. Upon synaptic vesicle recycling the toxin is taken up via the endocytic pathway. When the pH of the toxin-containing endosome drops a structural rearrangement occurs so that the N-terminus of the HC forms pores that allows the light chain (LC) to translocate into the cytosol. Once in the cytosol the disulfide bond linking the 2 subunits is reduced and LC cleaves its target protein on synaptic vesicles, preventing their fusion with the cytoplasmic membrane and thus neurotransmitter release. Requires complex gangliosides for full neurotoxicity. Electrical stimulation increases uptake of toxin, presumably by transiently exposing a receptor usually found in eukaryotic target synaptic vesicles. Blocks neurotransmitter release by cleaving synaptobrevin-2/VAMP2. It is not clear whether a synaptic vesicle protein acts as its receptor; there is evidence for and against SV2 fulfilling this function. Its function is as follows. Has protease activity. After translocation into the eukaryotic host cytosol, inhibits neurotransmitter release by acting as a zinc endopeptidase that catalyzes the hydrolysis of the '58-Gln-|-Lys-59' bond of synaptobrevin-2/VAMP2 and probably also the equivalent 'Gln-|-Lys' sites in VAMP1 and VAMP3. Substrate specificity is conferred by multiple interactions of LC with substrate. Functionally, responsible for host epithelial cell transcytosis, host nerve cell targeting and translocation of light chain (LC) into host cytosol. Composed of 3 subdomains; the translocation domain (TD), and N-terminus and C-terminus of the receptor-binding domain (RBD). The RBD is responsible for the adherence of the toxin to the cell surface. The N-terminus of the TD wraps an extended belt around the perimeter of the LC, protecting Zn(2+) in the active site; it may also prevent premature LC dissociation from the translocation channel and protect toxin prior to translocation. Isolated HC binds to host synaptosomes and neurons, significantly decreases uptake and toxicity of whole BoNT/F. Interferes with uptake of BoNT/E and to a lesser extent BoNT/C. in vitro binds gangliosides GT1b, GD1b and GD1a. Binds to synaptic vesicle glycoproteins SV2A, SV2B and SV2C which may serve as coreceptors with gangliosides. Interaction with SV2 proteins requires SV2 glycosylation. However knockout SV2A/SV2B mice still cleave synaptobrevin, leaving the identification of its receptor unclear. This Clostridium botulinum (strain Langeland / NCTC 10281 / Type F) protein is Botulinum neurotoxin type F.